The sequence spans 418 residues: MMSWADKYRPKNIDDVILNSEIRKQITEWIESWKEGIPKKRSLILYGSQGTGKTTTAYAIAGTFGVPVVEMNASDQRNRDSMRGTALMASLYGDLFVESAKRPSKVILIDEADNMFERGGDTGGIYELSKIIKNSANPIVITMNDIFEFRKKNYASDVISASLTIEMKQYGRKLDKNYNEFRRNIKARLIFILKNEGYTLPDQVVDRIIDRNMPDIRSMINDLEASAVSGTNISDQSSRDVPEIVYYMVDKAFKRNYDDTLRSIYGSDIDDSYYVSWIDENLPLKTVDLQDLVSAYEVISYADHILWAMERRRHYELMAFPMEIAGGVAYYIENMKHEYVKYQSPSYISQMSKTKEKRHAMMSLALKIGLLIHMGAQRTSEDLWFYSLLYQHNEKLRTFFEEKLNLTQGEENVLTRSE.

47 to 54 (GSQGTGKT) serves as a coordination point for ATP.

It belongs to the activator 1 small subunits family. RfcL subfamily. Heteromultimer composed of small subunits (RfcS) and large subunits (RfcL).

In terms of biological role, part of the RFC clamp loader complex which loads the PCNA sliding clamp onto DNA. This is Replication factor C large subunit from Thermoplasma acidophilum (strain ATCC 25905 / DSM 1728 / JCM 9062 / NBRC 15155 / AMRC-C165).